The chain runs to 474 residues: Cyclin-dependent kinase 2 homolog (474 aa).

Positions tyrosine 7–leucine 446 constitute a Protein kinase domain. ATP contacts are provided by residues leucine 13–valine 21 and lysine 36. Position 17 is a phosphothreonine (threonine 17). The residue at position 18 (tyrosine 18) is a Phosphotyrosine. The Proton acceptor role is filled by aspartate 131. Positions threonine 150–alanine 200 are disordered. A Phosphoserine modification is found at serine 230. Over residues glutamine 334 to serine 354 the composition is skewed to low complexity. The interval glutamine 334–alanine 356 is disordered.

Belongs to the protein kinase superfamily. CMGC Ser/Thr protein kinase family. CDC2/CDKX subfamily. May form a complex composed of at least the catalytic subunit CRK2 and a cyclin. Requires Mg(2+) as cofactor.

Its subcellular location is the cytoplasm. It catalyses the reaction L-seryl-[protein] + ATP = O-phospho-L-seryl-[protein] + ADP + H(+). The enzyme catalyses L-threonyl-[protein] + ATP = O-phospho-L-threonyl-[protein] + ADP + H(+). It carries out the reaction [DNA-directed RNA polymerase] + ATP = phospho-[DNA-directed RNA polymerase] + ADP + H(+). With respect to regulation, phosphorylation at Thr-17 or Tyr-18 inactivates the enzyme, while phosphorylation at Ser-230 activates it. Serine/threonine-protein kinase. Involved in the control of the cell cycle. Required for entry into S-phase and mitosis. Probable component of the kinase complex that phosphorylates the repetitive C-terminus of RNA polymerase II. The sequence is that of Cyclin-dependent kinase 2 homolog from Crithidia fasciculata.